A 407-amino-acid chain; its full sequence is MIKVASITKVEDGSIVTPKGFSAIGTAIGLKKGKKDLGAIVCDVPASCAAVYTTNQIQAAPLQVTKDSITTEGKLQAIIVNSGNANACTGMKGLQDAYEMRALGAEHFGLKEKYVAVASTGVIGVPLPMDIIRKGIVTLIPAKEENGAHSFSEAILTTDLITKETCYEMIIDGKKVMIAGVAKGSGMIHPNMATMLSFITTDARIEHDVLQTALSQITNHTFNQITVDGDTSTNDMVIAMASGLSETKPIDMEHADWETFVFALQKVCEDLAKKIAQDGEGATKLIEVNVLGVQTNEEAKKIAKQIVGSSLVKTAIHGEDPNWGRIISSIGQSEVAINPNTIDITLQSISVLKNSEPQTFSEEEMKERLQEDEIVINVYLHLGKETGSAWGCDLSYEYVKINACYRT.

Residues T157, K183, T194, E280, N402, and T407 each contribute to the substrate site. T194 serves as the catalytic Nucleophile.

This sequence belongs to the ArgJ family. In terms of assembly, heterotetramer of two alpha and two beta chains.

Its subcellular location is the cytoplasm. The catalysed reaction is N(2)-acetyl-L-ornithine + L-glutamate = N-acetyl-L-glutamate + L-ornithine. The enzyme catalyses L-glutamate + acetyl-CoA = N-acetyl-L-glutamate + CoA + H(+). The protein operates within amino-acid biosynthesis; L-arginine biosynthesis; L-ornithine and N-acetyl-L-glutamate from L-glutamate and N(2)-acetyl-L-ornithine (cyclic): step 1/1. Its pathway is amino-acid biosynthesis; L-arginine biosynthesis; N(2)-acetyl-L-ornithine from L-glutamate: step 1/4. In terms of biological role, catalyzes two activities which are involved in the cyclic version of arginine biosynthesis: the synthesis of N-acetylglutamate from glutamate and acetyl-CoA as the acetyl donor, and of ornithine by transacetylation between N(2)-acetylornithine and glutamate. This Bacillus anthracis protein is Arginine biosynthesis bifunctional protein ArgJ.